The following is a 354-amino-acid chain: Tetraacyldisaccharide 4'-kinase (354 aa).

An ATP-binding site is contributed by 53-60 (AWGGTGKT).

The protein belongs to the LpxK family.

It carries out the reaction a lipid A disaccharide + ATP = a lipid IVA + ADP + H(+). Its pathway is glycolipid biosynthesis; lipid IV(A) biosynthesis; lipid IV(A) from (3R)-3-hydroxytetradecanoyl-[acyl-carrier-protein] and UDP-N-acetyl-alpha-D-glucosamine: step 6/6. Its function is as follows. Transfers the gamma-phosphate of ATP to the 4'-position of a tetraacyldisaccharide 1-phosphate intermediate (termed DS-1-P) to form tetraacyldisaccharide 1,4'-bis-phosphate (lipid IVA). This is Tetraacyldisaccharide 4'-kinase from Nitratidesulfovibrio vulgaris (strain ATCC 29579 / DSM 644 / CCUG 34227 / NCIMB 8303 / VKM B-1760 / Hildenborough) (Desulfovibrio vulgaris).